Here is a 115-residue protein sequence, read N- to C-terminus: Variant surface glycoprotein ANTAT 1.8 (115 aa).

N-linked (GlcNAc...) asparagine glycosylation occurs at Asn42. Residue Asp92 is the site of GPI-anchor amidated aspartate attachment. Residues 93 to 115 constitute a propeptide, removed in mature form; sequence SSILVNKQLALSVVSAAFAALLF.

It localises to the cell membrane. VSG forms a coat on the surface of the parasite. The trypanosome evades the immune response of the host by expressing a series of antigenically distinct VSGs from an estimated 1000 VSG genes. The chain is Variant surface glycoprotein ANTAT 1.8 from Trypanosoma brucei brucei.